Reading from the N-terminus, the 83-residue chain is MKASMYLALAGLVLLFVVGYASESEEKEFPRELLSKIFAVDDFKGEERGCKGFSDSCTPGKNECCPNYACSSKHKWCKVYLGK.

The first 21 residues, 1–21 (MKASMYLALAGLVLLFVVGYA), serve as a signal peptide directing secretion. A propeptide spanning residues 22 to 48 (SESEEKEFPRELLSKIFAVDDFKGEER) is cleaved from the precursor. 3 disulfides stabilise this stretch: C50–C65, C57–C70, and C64–C77. Residue L81 is modified to Leucine amide.

Belongs to the neurotoxin 10 (Hwtx-1) family. 15 (Hntx-3) subfamily. As to quaternary structure, monomer. In terms of tissue distribution, expressed by the venom gland.

The protein resides in the secreted. Functionally, lethal neurotoxin. Selectively blocks tetrodotoxin-sensitive voltage-gated sodium channels (Nav). Does not affect tetrodotoxin-resistant voltage-gated sodium channels or calcium channels. The polypeptide is Mu-theraphotoxin-Hhn2n (Cyriopagopus hainanus (Chinese bird spider)).